The primary structure comprises 772 residues: Transducin-like enhancer protein 4 (772 aa).

2 disordered regions span residues 1–24 (MIRDLSKMYPQTRHPAPPHQPAQP) and 183–359 (LPIK…LTGL). The tract at residues 1-137 (MIRDLSKMYP…AIIGQQLQAQ (137 aa)) is q domain. The interval 138–205 (HLSHAHGLPV…HQRDRDSIKS (68 aa)) is GP domain. The segment covering 184–203 (PIKDEKKHHDSDHQRDRDSI) has biased composition (basic and acidic residues). Over residues 204 to 213 (KSSSVSPSAS) the composition is skewed to low complexity. Residues 206-275 (SSVSPSASFR…SPRGSPAHSP (70 aa)) are ccN domain. 2 stretches are compositionally biased toward basic and acidic residues: residues 216 to 253 (AAEKHRNSTDYSSESKKQKTEEKDIAARYDSDGEKSDD) and 274 to 290 (SPRENGLDKPRLLKKDA). Residues 276 to 452 (RENGLDKPRL…GGKPAYSFHV (177 aa)) are SP domain. Low complexity predominate over residues 291-306 (PISPASIASSSSTPSS). The segment covering 307 to 316 (KSKEHSHNEK) has biased composition (basic and acidic residues). Residues 318–329 (TTPVSKSNTPTP) are compositionally biased toward polar residues. WD repeat units lie at residues 484-522 (NHGEVVCAVTISNPTRHVYTGGKGCVKVWDISHPGNKSP), 530-569 (NRDNYIRSCRLLPDGRTLIVGGEASTLSIWDLAAPTPRIK), 574-613 (SSAPACYALAISPDSKVCFSCCSDGNIAVWDLHNQTLVRQ), 616-655 (GHTDGASCIDISNDGTKLWTGGLDNTVRSWDLREGRQLQQ), 657-696 (DFTSQIFSLGYCPTGEWLAVGMENSNVEVLHVTKPDKYQL), 698-737 (LHESCVLSLKFAHCGKWFVSTGKDNLLNAWRTPYGASIFQ), and 739-772 (KESSSVLSCDISVDDKYIVTGSGDKKATVYEVIY).

This sequence belongs to the WD repeat Groucho/TLE family. As to quaternary structure, interacts with tcf7, tcf7l1, ripply2.2/bowline, dscr6/ripply3 and foxd3. Associates with tbx6 in the presence of ripply2.2/bowline. Interacts with EFNB1 through the SP domain. In terms of processing, ubiquitinated by XIAP/BIRC4. As to expression, expressed at high levels in the spleen and ovary.

It localises to the nucleus. In terms of biological role, transcriptional corepressor. Functions with ripply2.2/bowline to down regulate transcription of tbx6-dependent gene expression. Represses transcription of siamois and nodal3. The polypeptide is Transducin-like enhancer protein 4 (tle4) (Xenopus laevis (African clawed frog)).